The primary structure comprises 124 residues: Small ribosomal subunit protein uS12 (124 aa).

Asp89 bears the 3-methylthioaspartic acid mark.

The protein belongs to the universal ribosomal protein uS12 family. In terms of assembly, part of the 30S ribosomal subunit. Contacts proteins S8 and S17. May interact with IF1 in the 30S initiation complex.

With S4 and S5 plays an important role in translational accuracy. Functionally, interacts with and stabilizes bases of the 16S rRNA that are involved in tRNA selection in the A site and with the mRNA backbone. Located at the interface of the 30S and 50S subunits, it traverses the body of the 30S subunit contacting proteins on the other side and probably holding the rRNA structure together. The combined cluster of proteins S8, S12 and S17 appears to hold together the shoulder and platform of the 30S subunit. The sequence is that of Small ribosomal subunit protein uS12 from Pectobacterium atrosepticum (strain SCRI 1043 / ATCC BAA-672) (Erwinia carotovora subsp. atroseptica).